The primary structure comprises 396 residues: Tryptophan synthase beta chain (396 aa).

Lys-86 is subject to N6-(pyridoxal phosphate)lysine.

Belongs to the TrpB family. Tetramer of two alpha and two beta chains. Pyridoxal 5'-phosphate serves as cofactor.

The enzyme catalyses (1S,2R)-1-C-(indol-3-yl)glycerol 3-phosphate + L-serine = D-glyceraldehyde 3-phosphate + L-tryptophan + H2O. The protein operates within amino-acid biosynthesis; L-tryptophan biosynthesis; L-tryptophan from chorismate: step 5/5. Functionally, the beta subunit is responsible for the synthesis of L-tryptophan from indole and L-serine. This chain is Tryptophan synthase beta chain, found in Aliivibrio fischeri (strain MJ11) (Vibrio fischeri).